We begin with the raw amino-acid sequence, 651 residues long: A-type voltage-gated potassium channel KCND1 (651 aa).

Residues 1-183 (MAAGVATWLP…RAFENPHTST (183 aa)) are Cytoplasmic-facing. An interaction with KCNIP1, KCNIP2, and other family members region spans residues 2 to 20 (AAGVATWLPFARAAAVGWL). 3 residues coordinate Zn(2+): H104, C131, and C132. Residues 144–164 (AERLAEDEEAEQAGEGPALPA) form a disordered region. The chain crosses the membrane as a helical span at residues 184–205 (AALVFYYVTGFFIAVSVIANVV). At 206 to 230 (ETIPCRGTPRWPSKEQSCGDRFPTA) the chain is on the extracellular side. Residues 231-252 (FFCMDTACVLIFTGEYLLRLFA) traverse the membrane as a helical segment. At 253-263 (APSRCRFLRSV) the chain is on the cytoplasmic side. A helical transmembrane segment spans residues 264-284 (MSLIDVVAILPYYIGLFVPKN). The Extracellular segment spans residues 285–287 (DDV). Residues 288-308 (SGAFVTLRVFRVFRIFKFSRH) traverse the membrane as a helical; Voltage-sensor segment. The Cytoplasmic portion of the chain corresponds to 309-323 (SQGLRILGYTLKSCA). Residues 310–323 (QGLRILGYTLKSCA) form an S4-S5 linker region. A helical transmembrane segment spans residues 324–345 (SELGFLLFSLTMAIIIFATVMF). Over 346 to 359 (YAEKGTSKTNFTSI) the chain is Extracellular. N355 carries N-linked (GlcNAc...) asparagine glycosylation. Residues 360 to 371 (PAAFWYTIVTMT) constitute an intramembrane region (helical). Residues 372-377 (TLGYGD) carry the Selectivity filter motif. Residues 372-379 (TLGYGDMV) lie within the membrane without spanning it. Over 380–386 (PSTIAGK) the chain is Extracellular. A helical transmembrane segment spans residues 387–415 (IFGSICSLSGVLVIALPVPVIVSNFSRIY). Over 416-651 (HQNQRADKRR…LPETVKISSL (236 aa)) the chain is Cytoplasmic. S458 carries the post-translational modification Phosphoserine. The interval 474–489 (FEQQHHHLLHCLEKTT) is required for dendritic targeting. At S555 the chain carries Phosphoserine. 2 disordered regions span residues 566 to 585 (RRSP…HDSL) and 601 to 651 (IPTP…ISSL). The segment covering 626 to 637 (TPNTTLRNSSLG) has biased composition (polar residues).

The protein belongs to the potassium channel family. D (Shal) (TC 1.A.1.2) subfamily. Kv4.1/KCND1 sub-subfamily. Component of heteromultimeric potassium channels. Identified in potassium channel complexes containing KCND1, KCND2, KCND3, KCNIP1, KCNIP2, KCNIP3, KCNIP4, DPP6 and DPP10.

The protein localises to the cell membrane. The catalysed reaction is K(+)(in) = K(+)(out). A-type voltage-gated potassium channel that mediates transmembrane potassium transport in excitable membranes in the brain. Mediates A-type current I(SA) in suprachiasmatic nucleus (SCN) neurons. Exhibits a low-threshold A-type current with a hyperpolarized steady-state inactivation midpoint and the recovery process was steeply voltage-dependent, with recovery being markedly faster at more negative potentials. May regulates repetitive firing rates in the suprachiasmatic nucleus (SCN) neurons and circadian rhythms in neuronal excitability and behavior. Contributes to the regulation of the circadian rhythm of action potential firing in suprachiasmatic nucleus neurons, which regulates the circadian rhythm of locomotor activity. The regulatory subunit KCNIP1 modulates the kinetics of channel inactivation, increases the current amplitudes and accelerates recovery from inactivation, shifts activation in a depolarizing direction. The regulatory subunit DPP10 decreases the voltage sensitivity of the inactivation channel gating. The polypeptide is A-type voltage-gated potassium channel KCND1 (Mus musculus (Mouse)).